Reading from the N-terminus, the 442-residue chain is NADH-quinone oxidoreductase subunit D (442 aa).

This sequence belongs to the complex I 49 kDa subunit family. As to quaternary structure, NDH-1 is composed of 14 different subunits. Subunits NuoB, C, D, E, F, and G constitute the peripheral sector of the complex.

It localises to the cell membrane. It catalyses the reaction a quinone + NADH + 5 H(+)(in) = a quinol + NAD(+) + 4 H(+)(out). In terms of biological role, NDH-1 shuttles electrons from NADH, via FMN and iron-sulfur (Fe-S) centers, to quinones in the respiratory chain. The immediate electron acceptor for the enzyme in this species is believed to be a menaquinone. Couples the redox reaction to proton translocation (for every two electrons transferred, four hydrogen ions are translocated across the cytoplasmic membrane), and thus conserves the redox energy in a proton gradient. In Mycolicibacterium smegmatis (strain ATCC 700084 / mc(2)155) (Mycobacterium smegmatis), this protein is NADH-quinone oxidoreductase subunit D.